We begin with the raw amino-acid sequence, 522 residues long: Insulinoma-associated protein 1 (522 aa).

Over residues 1-12 the composition is skewed to basic residues; the sequence is MPRGFLVKRSKK. Positions 1–20 are SNAG domain; that stretch reads MPRGFLVKRSKKSTPVSYRI. Disordered stretches follow at residues 1–112 and 182–235; these read MPRG…SREH and AAEA…KPKA. The required and sufficient for interaction with KDM1A stretch occupies residues 2–7; that stretch reads PRGFLV. A necessary for interaction with CCND1 region spans residues 43–57; it reads PPAPGPGPVPGPLQP. Positions 43–61 are enriched in pro residues; that stretch reads PPAPGPGPVPGPLQPPPPT. 2 stretches are compositionally biased toward low complexity: residues 66-75 and 212-228; these read AALAAALACA and ASAAAAAEPPAKVAKAP. Residues 277–297 form a C2H2-type 1; atypical zinc finger; that stretch reads FICQLCKEEYADPFALAQHKC. The segment at 305–327 adopts a C2H2-type 2 zinc-finger fold; the sequence is YRCPECAKVFSCPANLASHRRWH. The segment at 325 to 373 is disordered; it reads RWHKPRPAPAAARACEPETPARAEAREATGGGGSDRDTPSPGGVSESGS. Basic and acidic residues predominate over residues 339–351; the sequence is CEPETPARAEARE. 3 C2H2-type zinc fingers span residues 378 to 400, 453 to 476, and 481 to 504; these read YECHHCAKKFRRQAYLRKHLLAH, HLCPVCGETFPSKGAQERHLRLLH, and FPCKYCPATFYSSPGLTRHINKCH.

The protein belongs to the INSM1 family. Interacts (via the N-terminal region) with CCND1 (via cyclin N-terminal domain); the interaction competes with the binding of CCND1 to CDK4 during cell cycle progression and increases its transcriptional repressor activity. Interacts with HDAC3; the interaction increases its transcriptional repressor activity. Interacts (via the SNAG domain) with HDAC1. Interacts (via the SNAG domain) with HDAC2. Interacts (via the SNAG domain) with KDM1A. Interacts (via the SNAG domain) with RCOR1. Interacts with SORBS1.

The protein localises to the nucleus. Functionally, sequence-specific DNA-binding transcriptional regulator that plays a key role in neurogenesis and neuroendocrine cell differentiation during embryonic and/or fetal development. Binds to the consensus sequence 5'-[TG][TC][TC][TT][GA]GGG[CG]A-3' in target promoters. Acts as a transcriptional repressor of NEUROD1 and INS expression via its interaction with cyclin CCND1 in a cell cycle-independent manner. Negatively regulates skeletal muscle-specific gene expression in endocrine cells of the pituitary by inhibiting the Notch signaling pathway. Represses target gene transcription by recruiting chromatin-modifying factors, such as HDAC1, HDAC2, HDAC3, KDM1A and RCOR1 histone deacetylases. Binds to its own promoter, suggesting autoregulation as a self-control feedback mechanism. Competes with histone H3 for the same binding site on the histone demethylase complex formed by KDM1A and RCOR1, and thereby inhibits demethylation of histone H3 at 'Lys-4'. Promotes the generation and expansion of neuronal basal progenitor cells in the developing neocortex. Involved in the differentiation of endocrine cells of the developing anterior pituitary gland, of the pancreas and intestine, and of sympatho-adrenal cells in the peripheral nervous system. Promotes cell cycle signaling arrest and inhibition of cellular proliferation. The sequence is that of Insulinoma-associated protein 1 (INSM1) from Bos taurus (Bovine).